Here is a 270-residue protein sequence, read N- to C-terminus: MGDSKELVWNGSINVQIKLDSRLLVDGVPEGRRLVNIRVPRESHIAIYTPLVLERLRNVLRSDIEELLPKVWYSYKDISLPWSIPFGTLFDIYNGAHKGISGSRDNYINVWKLNLVTDEKFPINVIPIIEGQDQLRKFMMQSWKQCCFILNGSSKRVMSLSLQDSLEVWEGVTERDYAKYSGVIKRILPRTPRRIPVAIHAANGGPIVQTTEPTLTDTSFSQAVEGIVKADFVVCQGIVMYLRDFSDTSLYDVYDKLHSIDGYLHLIANL.

A Glycyl lysine isopeptide (Lys-Gly) (interchain with G-Cter in ATG12) cross-link involves residue Lys144.

It belongs to the ATG5 family. Conjugated with ATG12. Conjugated to ATG12; which is essential for autophagy.

It is found in the preautophagosomal structure membrane. Functionally, involved in cytoplasm to vacuole transport (Cvt) and autophagic vesicle formation. Autophagy is essential for maintenance of amino acid levels and protein synthesis under nitrogen starvation. Required for selective autophagic degradation of the nucleus (nucleophagy). Also required for mitophagy, which eliminates defective or superfluous mitochondria in order to fulfill cellular energy requirements and prevent excess ROS production. Conjugation with ATG12, through a ubiquitin-like conjugating system involving ATG7 as an E1-like activating enzyme and ATG10 as an E2-like conjugating enzyme, is essential for its function. The ATG12-ATG5 conjugate acts as an E3-like enzyme which is required for lipidation of ATG8 and ATG8 association to the vesicle membranes. In Candida glabrata (strain ATCC 2001 / BCRC 20586 / JCM 3761 / NBRC 0622 / NRRL Y-65 / CBS 138) (Yeast), this protein is Autophagy protein 5 (ATG5).